A 252-amino-acid polypeptide reads, in one-letter code: tRNA (guanine-N(1)-)-methyltransferase (252 aa).

Residues Gly-113 and 133–138 each bind S-adenosyl-L-methionine; that span reads IGDYVL. The segment covering 229 to 238 has biased composition (low complexity); sequence VARPAANAPA. The disordered stretch occupies residues 229–252; it reads VARPAANAPAKGESQKTPKNKTDG. Residues 241–252 show a composition bias toward basic and acidic residues; the sequence is ESQKTPKNKTDG.

The protein belongs to the RNA methyltransferase TrmD family. In terms of assembly, homodimer.

Its subcellular location is the cytoplasm. The enzyme catalyses guanosine(37) in tRNA + S-adenosyl-L-methionine = N(1)-methylguanosine(37) in tRNA + S-adenosyl-L-homocysteine + H(+). In terms of biological role, specifically methylates guanosine-37 in various tRNAs. The polypeptide is tRNA (guanine-N(1)-)-methyltransferase (Rhodopseudomonas palustris (strain HaA2)).